Reading from the N-terminus, the 519-residue chain is Pleckstrin homology domain-containing family A member 8 (519 aa).

The region spanning 1 to 93 (MEGVLYKWTN…WLVALGSAKA (93 aa)) is the PH domain. A Phosphothreonine modification is found at T139. At S145 the chain carries Phosphoserine. Residue T153 is modified to Phosphothreonine. The tract at residues 274 to 302 (GEDNLGNHDSSLAQPASDSSSSPPESHWE) is disordered. Low complexity predominate over residues 282–298 (DSSLAQPASDSSSSPPE). The glycolipid transfer protein homology domain stretch occupies residues 310-519 (TFFSTMNTSF…VHGLESDEVV (210 aa)).

Homodimer. Interacts with ARF1; the interaction together with phosphatidylinositol 4-phosphate binding is required for FAPP2 GlcCer transfer ability.

It is found in the golgi apparatus. Its subcellular location is the trans-Golgi network membrane. The protein resides in the membrane. In terms of biological role, cargo transport protein that is required for apical transport from the trans-Golgi network (TGN). Transports AQP2 from the trans-Golgi network (TGN) to sites of AQP2 phosphorylation. Mediates the non-vesicular transport of glucosylceramide (GlcCer) from the trans-Golgi network (TGN) to the plasma membrane and plays a pivotal role in the synthesis of complex glycosphingolipids. Binding of both phosphatidylinositol 4-phosphate (PIP) and ARF1 are essential for the GlcCer transfer ability. Also required for primary cilium formation, possibly by being involved in the transport of raft lipids to the apical membrane, and for membrane tubulation. This Canis lupus familiaris (Dog) protein is Pleckstrin homology domain-containing family A member 8 (PLEKHA8).